The primary structure comprises 279 residues: Energy-coupling factor transporter ATP-binding protein EcfA1 (279 aa).

One can recognise an ABC transporter domain in the interval 6–240 (LSIEGVSFRY…GSKLERIGLD (235 aa)). 40-47 (GHNGSGKS) is an ATP binding site.

It belongs to the ABC transporter superfamily. Energy-coupling factor EcfA family. As to quaternary structure, forms a stable energy-coupling factor (ECF) transporter complex composed of 2 membrane-embedded substrate-binding proteins (S component), 2 ATP-binding proteins (A component) and 2 transmembrane proteins (T component).

Its subcellular location is the cell membrane. In terms of biological role, ATP-binding (A) component of a common energy-coupling factor (ECF) ABC-transporter complex. Unlike classic ABC transporters this ECF transporter provides the energy necessary to transport a number of different substrates. This is Energy-coupling factor transporter ATP-binding protein EcfA1 from Geobacillus kaustophilus (strain HTA426).